A 293-amino-acid polypeptide reads, in one-letter code: MEIIEGKMPFMGYETHYRIVGRRSEKSPLVLLHGGPGSTHNYFEVLDKLAKIDDRRIIMYDQLGCGNSSIPDDHPELYTKETWVKELKTLREHLALRKIHLLGQSWGGMLAIIYMCDYHPEGIQSLILSSTLSSASLWSKELHRMIKYLPIEEQAAIHRAELTDTFTEPDYLKANEHFMNQHAIDMKKKWPECVMREKKGGTVAYETAWGPNEYTPEGNLHDYEYTDQLSKIKVPTLITSGTDDLCTPYVAKTMHDHIAGSQWKLFENCSHMSFVQKTDEYIAMLKKWLDAND.

Residues 28-277 (PLVLLHGGPG…NCSHMSFVQK (250 aa)) enclose the AB hydrolase-1 domain. S105 acts as the Nucleophile in catalysis. D244 is a catalytic residue. H271 serves as the catalytic Proton donor.

This sequence belongs to the peptidase S33 family.

It is found in the cell envelope. It carries out the reaction Release of N-terminal proline from a peptide.. Functionally, releases the N-terminal proline from various substrates. In Lactobacillus acidophilus (strain ATCC 700396 / NCK56 / N2 / NCFM), this protein is Proline iminopeptidase.